The following is a 293-amino-acid chain: 4-hydroxy-tetrahydrodipicolinate synthase (293 aa).

Thr-45 serves as a coordination point for pyruvate. The Proton donor/acceptor role is filled by Tyr-133. The Schiff-base intermediate with substrate role is filled by Lys-161. Position 203 (Ile-203) interacts with pyruvate.

This sequence belongs to the DapA family. As to quaternary structure, homotetramer; dimer of dimers.

It is found in the cytoplasm. The catalysed reaction is L-aspartate 4-semialdehyde + pyruvate = (2S,4S)-4-hydroxy-2,3,4,5-tetrahydrodipicolinate + H2O + H(+). It functions in the pathway amino-acid biosynthesis; L-lysine biosynthesis via DAP pathway; (S)-tetrahydrodipicolinate from L-aspartate: step 3/4. Functionally, catalyzes the condensation of (S)-aspartate-beta-semialdehyde [(S)-ASA] and pyruvate to 4-hydroxy-tetrahydrodipicolinate (HTPA). The sequence is that of 4-hydroxy-tetrahydrodipicolinate synthase from Exiguobacterium sibiricum (strain DSM 17290 / CCUG 55495 / CIP 109462 / JCM 13490 / 255-15).